Reading from the N-terminus, the 441-residue chain is Fibroleukin (441 aa).

A signal peptide spans 1–15; that stretch reads MKLANWCWLSSTVLA. Residue Asn-25 is glycosylated (N-linked (GlcNAc...) asparagine). A coiled-coil region spans residues 73-167; the sequence is SRIEEVFKEV…LEKLNLVNMN (95 aa). The interval 102–128 is disordered; the sequence is QADDSRDPGRNGLLLPGTGAPGETGDN. 4 N-linked (GlcNAc...) asparagine glycosylation sites follow: Asn-179, Asn-237, Asn-265, and Asn-338. One can recognise a Fibrinogen C-terminal domain in the interval 206 to 438; it reads VQQHLIYKDC…EVKMMIRPKH (233 aa).

In terms of assembly, homotetramer; disulfide-linked.

Its subcellular location is the secreted. Its function is as follows. May play a role in physiologic lymphocyte functions at mucosal sites. The polypeptide is Fibroleukin (FGL2) (Bos taurus (Bovine)).